A 563-amino-acid chain; its full sequence is Src substrate protein p85 (563 aa).

Cortactin repeat units follow at residues 89 to 125 (ASHGYGGKFGVEQDRMDKSAVGHEYQSKLSKHCSQVD), 126 to 162 (SVKGFGGKFGVQTDRVDQSAVGFEYQGKTEKHASQKD), 163 to 199 (YSSGFGGKYGVQADRVDKSAVGFDYQGKTEKHESQKD), 200 to 236 (YSKGFGGKYGVDKDKVDKSAVGFEYQGKTEKHESQKD), 237 to 273 (YVKGFGGKFGVQTDRQDKCALGWDHQEKVQLHESQKD), and 274 to 310 (YKSGFGGKFGVQTERQDPSAVGFDYKEKLAKHESQQD). One copy of the Cortactin 7; truncated repeat lies at 311 to 333 (YSKGFGGKYGVQKDRMDKNAATF). The tract at residues 331-477 (ATFEDIEKPT…EAVSQREAEY (147 aa)) is disordered. The stretch at 349–410 (VERVANKTSS…EEQAKAKKQT (62 aa)) forms a coiled coil. The span at 366–405 (LAKEKEQEDRRKAEAERAQRMAREKQEQEEARRKLEEQAK) shows a compositional bias: basic and acidic residues. The region spanning 505-563 (ELGITAIALYDYQAAGDDEISFDPDDIITNIEMIDDGWWRGVCKGRYGLFPANYVELRQ) is the SH3 domain.

Acetylated. In terms of processing, in normal cells, appears to be phosphorylated on serine and threonine; in cells expressing activated forms of pp60-src, they become heavily phosphorylated on tyrosine in vitro. Tyrosine phosphorylation in transformed cells may contribute to cellular growth regulation and transformation.

The protein localises to the cytoplasm. Its subcellular location is the cytoskeleton. It localises to the cell projection. The protein resides in the lamellipodium. It is found in the ruffle. The protein localises to the dendrite. Its subcellular location is the cell membrane. It localises to the podosome. The protein resides in the cell junction. It is found in the focal adhesion. The protein localises to the membrane. Its subcellular location is the clathrin-coated pit. It localises to the dendritic spine. The protein resides in the cell cortex. It is found in the endoplasmic reticulum. Contributes to the organization of the actin cytoskeleton and cell shape. Plays a role in the formation of lamellipodia and in cell migration. Plays a role in the regulation of neuron morphology, axon growth and formation of neuronal growth cones, and may play a role in the regulation of neuronal spine density. Plays a role in focal adhesion assembly and turnover. Plays a role in intracellular protein transport and endocytosis, and in modulating the levels of potassium channels present at the cell membrane. Plays a role in endocytosis via clathrin-coated pits. The sequence is that of Src substrate protein p85 (CTTN1) from Gallus gallus (Chicken).